Reading from the N-terminus, the 425-residue chain is Serine hydroxymethyltransferase (425 aa).

Residues L126 and G130–L132 each bind (6S)-5,6,7,8-tetrahydrofolate. K234 carries the post-translational modification N6-(pyridoxal phosphate)lysine.

This sequence belongs to the SHMT family. In terms of assembly, homodimer. It depends on pyridoxal 5'-phosphate as a cofactor.

It localises to the cytoplasm. It catalyses the reaction (6R)-5,10-methylene-5,6,7,8-tetrahydrofolate + glycine + H2O = (6S)-5,6,7,8-tetrahydrofolate + L-serine. It participates in one-carbon metabolism; tetrahydrofolate interconversion. Its pathway is amino-acid biosynthesis; glycine biosynthesis; glycine from L-serine: step 1/1. Catalyzes the reversible interconversion of serine and glycine with tetrahydrofolate (THF) serving as the one-carbon carrier. This reaction serves as the major source of one-carbon groups required for the biosynthesis of purines, thymidylate, methionine, and other important biomolecules. Also exhibits THF-independent aldolase activity toward beta-hydroxyamino acids, producing glycine and aldehydes, via a retro-aldol mechanism. This is Serine hydroxymethyltransferase from Desulfotalea psychrophila (strain LSv54 / DSM 12343).